Reading from the N-terminus, the 85-residue chain is Large ribosomal subunit protein eL34 (85 aa).

Belongs to the eukaryotic ribosomal protein eL34 family.

The chain is Large ribosomal subunit protein eL34 from Saccharolobus islandicus (strain Y.N.15.51 / Yellowstone #2) (Sulfolobus islandicus).